A 597-amino-acid chain; its full sequence is Elongation factor 4 (597 aa).

Residues 2 to 184 (DHIRNFSIIA…ALIAKVPPPK (183 aa)) form the tr-type G domain. Residues 14-19 (DHGKST) and 131-134 (NKID) contribute to the GTP site.

The protein belongs to the TRAFAC class translation factor GTPase superfamily. Classic translation factor GTPase family. LepA subfamily.

It localises to the cell inner membrane. The enzyme catalyses GTP + H2O = GDP + phosphate + H(+). In terms of biological role, required for accurate and efficient protein synthesis under certain stress conditions. May act as a fidelity factor of the translation reaction, by catalyzing a one-codon backward translocation of tRNAs on improperly translocated ribosomes. Back-translocation proceeds from a post-translocation (POST) complex to a pre-translocation (PRE) complex, thus giving elongation factor G a second chance to translocate the tRNAs correctly. Binds to ribosomes in a GTP-dependent manner. This Cupriavidus pinatubonensis (strain JMP 134 / LMG 1197) (Cupriavidus necator (strain JMP 134)) protein is Elongation factor 4.